A 77-amino-acid chain; its full sequence is uncharacterized protein (77 aa).

The helical transmembrane segment at 49–71 threads the bilayer; the sequence is LVIASLILAIILLGILYYISYQM.

It localises to the membrane. This is an uncharacterized protein from Archaeoglobus fulgidus (strain ATCC 49558 / DSM 4304 / JCM 9628 / NBRC 100126 / VC-16).